The chain runs to 419 residues: Gamma-glutamyl phosphate reductase (419 aa).

Belongs to the gamma-glutamyl phosphate reductase family.

The protein resides in the cytoplasm. The enzyme catalyses L-glutamate 5-semialdehyde + phosphate + NADP(+) = L-glutamyl 5-phosphate + NADPH + H(+). It functions in the pathway amino-acid biosynthesis; L-proline biosynthesis; L-glutamate 5-semialdehyde from L-glutamate: step 2/2. Catalyzes the NADPH-dependent reduction of L-glutamate 5-phosphate into L-glutamate 5-semialdehyde and phosphate. The product spontaneously undergoes cyclization to form 1-pyrroline-5-carboxylate. This is Gamma-glutamyl phosphate reductase from Azobacteroides pseudotrichonymphae genomovar. CFP2.